A 400-amino-acid polypeptide reads, in one-letter code: Enoyl-[acyl-carrier-protein] reductase [NADH] (400 aa).

Residues 48 to 53, 74 to 75, 111 to 112, and 139 to 140 each bind NAD(+); these read GASTGY, FE, DA, and LA. Substrate is bound at residue Y225. Y235 serves as the catalytic Proton donor. Residues K244 and 273–275 each bind NAD(+); that span reads VVT.

The protein belongs to the TER reductase family. In terms of assembly, monomer.

It carries out the reaction a 2,3-saturated acyl-[ACP] + NAD(+) = a (2E)-enoyl-[ACP] + NADH + H(+). It functions in the pathway lipid metabolism; fatty acid biosynthesis. Functionally, involved in the final reduction of the elongation cycle of fatty acid synthesis (FAS II). Catalyzes the reduction of a carbon-carbon double bond in an enoyl moiety that is covalently linked to an acyl carrier protein (ACP). The sequence is that of Enoyl-[acyl-carrier-protein] reductase [NADH] from Burkholderia cenocepacia (strain HI2424).